We begin with the raw amino-acid sequence, 123 residues long: Large ribosomal subunit protein bL20 (123 aa).

The protein belongs to the bacterial ribosomal protein bL20 family.

Functionally, binds directly to 23S ribosomal RNA and is necessary for the in vitro assembly process of the 50S ribosomal subunit. It is not involved in the protein synthesizing functions of that subunit. This chain is Large ribosomal subunit protein bL20, found in Chlamydia trachomatis serovar L2b (strain UCH-1/proctitis).